The chain runs to 144 residues: Large ribosomal subunit protein uL15 (144 aa).

The tract at residues 1-51 (MQLNTLSPAQGEKKSRKRVGRGIGSGIGKTCGSGHKGQKSRSGGFNKIGFE) is disordered. The span at 21-35 (RGIGSGIGKTCGSGH) shows a compositional bias: gly residues.

The protein belongs to the universal ribosomal protein uL15 family. In terms of assembly, part of the 50S ribosomal subunit.

In terms of biological role, binds to the 23S rRNA. The sequence is that of Large ribosomal subunit protein uL15 from Vesicomyosocius okutanii subsp. Calyptogena okutanii (strain HA).